The primary structure comprises 269 residues: Protein IAL1 (269 aa).

An LOB domain is found at 32-133 (SPCAACKFLR…QDLARAKYEL (102 aa)).

It belongs to the LOB domain-containing protein family. Expressed in leaves, leaf primordia, immature ears, immature tassels, whole ovules, silk and husk leaves.

The protein resides in the nucleus. The polypeptide is Protein IAL1 (Zea mays (Maize)).